A 312-amino-acid polypeptide reads, in one-letter code: Ribosomal RNA small subunit methyltransferase H (312 aa).

Residues 33–35, Asp-53, Phe-80, Asp-102, and Gln-109 contribute to the S-adenosyl-L-methionine site; that span reads GGH.

It belongs to the methyltransferase superfamily. RsmH family.

It is found in the cytoplasm. It catalyses the reaction cytidine(1402) in 16S rRNA + S-adenosyl-L-methionine = N(4)-methylcytidine(1402) in 16S rRNA + S-adenosyl-L-homocysteine + H(+). In terms of biological role, specifically methylates the N4 position of cytidine in position 1402 (C1402) of 16S rRNA. This is Ribosomal RNA small subunit methyltransferase H from Heliobacterium mobile (Heliobacillus mobilis).